The primary structure comprises 771 residues: ATP-dependent DNA helicase UvrD1 (771 aa).

The tract at residues 1-21 (MSVHATDAKPPGPSPADQLLD) is disordered. One can recognise a UvrD-like helicase ATP-binding domain in the interval 21 to 311 (DGLNPQQRQA…ILLEQNYRST (291 aa)). Residues 45 to 50 (GSGKTA) and Arg309 contribute to the ATP site. The UvrD-like helicase C-terminal domain occupies 312–603 (QNILSAANSV…TLMTLHTAKG (292 aa)). The disordered stretch occupies residues 691 to 716 (FSAPVSGAGRFGSARPSPTRSGASRR).

This sequence belongs to the helicase family. UvrD subfamily. Monomer. Requires Mg(2+) as cofactor.

It carries out the reaction Couples ATP hydrolysis with the unwinding of duplex DNA by translocating in the 3'-5' direction.. The catalysed reaction is ATP + H2O = ADP + phosphate + H(+). Functionally, DNA-dependent ATPase, acting on dsDNA with a 3'-ssDNA tail, unwinding with 3'-to 5'-polarity. Also highly efficient on nicked DNA. Involved in the post-incision events of nucleotide excision repair. This chain is ATP-dependent DNA helicase UvrD1 (uvrD1), found in Mycobacterium bovis (strain ATCC BAA-935 / AF2122/97).